Reading from the N-terminus, the 121-residue chain is Small ribosomal subunit protein uS13 (121 aa).

A disordered region spans residues 90–121 (RHRRGLPVRGQHTKNNARTRKGKKVSIAGRKK).

It belongs to the universal ribosomal protein uS13 family. As to quaternary structure, part of the 30S ribosomal subunit. Forms a loose heterodimer with protein S19. Forms two bridges to the 50S subunit in the 70S ribosome.

Its function is as follows. Located at the top of the head of the 30S subunit, it contacts several helices of the 16S rRNA. In the 70S ribosome it contacts the 23S rRNA (bridge B1a) and protein L5 of the 50S subunit (bridge B1b), connecting the 2 subunits; these bridges are implicated in subunit movement. Contacts the tRNAs in the A and P-sites. This Lactiplantibacillus plantarum (strain ATCC BAA-793 / NCIMB 8826 / WCFS1) (Lactobacillus plantarum) protein is Small ribosomal subunit protein uS13.